Consider the following 339-residue polypeptide: NADH-quinone oxidoreductase subunit H (339 aa).

Helical transmembrane passes span 9–29, 50–70, 82–102, 115–135, 161–181, 187–207, 235–255, 275–295, and 311–331; these read IFPL…LILC, PNVV…KLLF, ILFI…WAVI, VGVL…IIAG, MGLV…SEII, MPWW…ISVL, MGFA…SAMT, IPGF…FLWI, and GWKV…SVLV.

Belongs to the complex I subunit 1 family. As to quaternary structure, NDH-1 is composed of 14 different subunits. Subunits NuoA, H, J, K, L, M, N constitute the membrane sector of the complex.

The protein resides in the cell inner membrane. The catalysed reaction is a quinone + NADH + 5 H(+)(in) = a quinol + NAD(+) + 4 H(+)(out). In terms of biological role, NDH-1 shuttles electrons from NADH, via FMN and iron-sulfur (Fe-S) centers, to quinones in the respiratory chain. The immediate electron acceptor for the enzyme in this species is believed to be ubiquinone. Couples the redox reaction to proton translocation (for every two electrons transferred, four hydrogen ions are translocated across the cytoplasmic membrane), and thus conserves the redox energy in a proton gradient. This subunit may bind ubiquinone. The sequence is that of NADH-quinone oxidoreductase subunit H from Rickettsia peacockii (strain Rustic).